The sequence spans 115 residues: NADH-ubiquinone oxidoreductase chain 3 (115 aa).

Transmembrane regions (helical) follow at residues 3–23 (FVLI…ITFW), 55–75 (FFLV…LLPL), and 84–104 (LPLM…SLAY).

The protein belongs to the complex I subunit 3 family. Core subunit of respiratory chain NADH dehydrogenase (Complex I) which is composed of 45 different subunits. Interacts with TMEM186. Interacts with TMEM242.

The protein localises to the mitochondrion inner membrane. It catalyses the reaction a ubiquinone + NADH + 5 H(+)(in) = a ubiquinol + NAD(+) + 4 H(+)(out). Core subunit of the mitochondrial membrane respiratory chain NADH dehydrogenase (Complex I) which catalyzes electron transfer from NADH through the respiratory chain, using ubiquinone as an electron acceptor. Essential for the catalytic activity of complex I. The protein is NADH-ubiquinone oxidoreductase chain 3 of Pan paniscus (Pygmy chimpanzee).